The primary structure comprises 173 residues: Inosine/xanthosine triphosphatase (173 aa).

Threonine 8–lysine 13 provides a ligand contact to substrate. Mg(2+)-binding residues include glutamate 38 and glutamate 68. Glutamate 68–alanine 69 contributes to the substrate binding site.

It belongs to the YjjX NTPase family. As to quaternary structure, homodimer. Requires Mg(2+) as cofactor. Mn(2+) serves as cofactor.

It catalyses the reaction XTP + H2O = XDP + phosphate + H(+). It carries out the reaction ITP + H2O = IDP + phosphate + H(+). In terms of biological role, phosphatase that hydrolyzes non-canonical purine nucleotides such as XTP and ITP to their respective diphosphate derivatives. Probably excludes non-canonical purines from DNA/RNA precursor pool, thus preventing their incorporation into DNA/RNA and avoiding chromosomal lesions. The sequence is that of Inosine/xanthosine triphosphatase (yjjX) from Escherichia coli (strain ATCC 8739 / DSM 1576 / NBRC 3972 / NCIMB 8545 / WDCM 00012 / Crooks).